The following is a 326-amino-acid chain: tRNA-modifying protein YgfZ (326 aa).

Residues Trp27 and Trp189 each coordinate folate.

Belongs to the tRNA-modifying YgfZ family.

It localises to the cytoplasm. Functionally, folate-binding protein involved in regulating the level of ATP-DnaA and in the modification of some tRNAs. It is probably a key factor in regulatory networks that act via tRNA modification, such as initiation of chromosomal replication. The sequence is that of tRNA-modifying protein YgfZ from Salmonella typhimurium (strain LT2 / SGSC1412 / ATCC 700720).